Consider the following 359-residue polypeptide: MSFTAPSDPVNKPTKVKVSQLCELCHSRKALIRRPKNLSKLCKQCFCLVFETEIHNTIVANNLFQRGEKVAVGASGGKDSTVLAHMLKLLNDRYDYGIEIVLLSIDEGIIGYRDDSLATVKRNQQQYGLPLEIFSFKDLYDWTMDEIVSVAGIRNSCTYCGVFRRQSLDRGAAKLGISHVVTGHNADDMAETVLMNILRGDVARLEKSTAIITQSSGSPIKRSKPFKYSYQKEIVLYAHYMKLDYFSTECTYAPEAFRGTAREYMKNLEAVRPSCIIDIIQSGENLALKAKKSNAGKRVVKFVDGNRCARCGYLSSNNICKACMLLEGLEKSRAQVAIENDTSADGAALKLRALEKLSF.

This sequence belongs to the TtcA family. CTU1/NCS6/ATPBD3 subfamily. As to quaternary structure, interacts with NCS2 and URM1. May act by forming a heterodimer with NCS2. Component of a large molecular weight complex of more than 250 kDa.

It is found in the cytoplasm. Its subcellular location is the mitochondrion. It functions in the pathway tRNA modification; 5-methoxycarbonylmethyl-2-thiouridine-tRNA biosynthesis. Plays a central role in 2-thiolation of mcm(5)S(2)U at tRNA wobble positions of tRNA(Lys), tRNA(Glu) and tRNA(Gln). Directly binds tRNAs and probably acts by catalyzing adenylation of tRNAs, an intermediate required for 2-thiolation. It is unclear whether it acts as a sulfurtransferase that transfers sulfur from thiocarboxylated URM1 onto the uridine of tRNAs at wobble position. Prior mcm(5) tRNA modification by the elongator complex is required for 2-thiolation. May also be involved in protein urmylation. May also be involved in protein urmylation and in invasive and pseudohyphal growth. The protein is Cytoplasmic tRNA 2-thiolation protein 1 of Saccharomyces cerevisiae (strain ATCC 204508 / S288c) (Baker's yeast).